The following is a 390-amino-acid chain: RNA polymerase sigma factor SigA (390 aa).

Residues 48-57 (FLEPQTDEDD) are compositionally biased toward acidic residues. A disordered region spans residues 48–75 (FLEPQTDEDDAKSGKAAKSRRRTQSKKK). Positions 62 to 75 (KAAKSRRRTQSKKK) are enriched in basic residues. Positions 158 to 228 (MVQSNLRLVV…TRAIADQSRT (71 aa)) are sigma-70 factor domain-2. An Interaction with polymerase core subunit RpoC motif is present at residues 182–185 (DLIQ). Residues 237–312 (ETISRIKKTT…ESDGETPEDQ (76 aa)) form a sigma-70 factor domain-3 region. The interval 325–378 (VLDSLSPRERDVLRLRYGLDDGRMKTLEEIGQIFNVTRERIRQIEAKALRKLRH) is sigma-70 factor domain-4. A DNA-binding region (H-T-H motif) is located at residues 351–370 (LEEIGQIFNVTRERIRQIEA).

This sequence belongs to the sigma-70 factor family. RpoD/SigA subfamily. Interacts transiently with the RNA polymerase catalytic core.

It is found in the cytoplasm. Functionally, sigma factors are initiation factors that promote the attachment of RNA polymerase to specific initiation sites and are then released. This sigma factor is the primary sigma factor during exponential growth. The sequence is that of RNA polymerase sigma factor SigA from Nostoc sp. (strain PCC 7120 / SAG 25.82 / UTEX 2576).